The sequence spans 221 residues: Small histidine-alanine-rich protein (221 aa).

Residues 1–21 form the signal peptide; that stretch reads MVSFSKNKILSAAVFASVLLL. Residues 52-67 show a composition bias toward basic and acidic residues; the sequence is AHAGDAHHAHHVADAH. Disordered stretches follow at residues 52-141 and 180-221; these read AHAG…AANA and AHHD…HLHH. 2 tandem repeats follow at residues 57 to 59 and 60 to 62. Positions 57-68 are 4 X 3 AA approximate tandem repeats of A-H-H; it reads AHHAHHVADAHH. One copy of the 1-3; approximate repeat lies at 63–65; the sequence is VAD. 13 repeat units span residues 66-68, 69-74, 75-80, 81-86, 87-92, 93-98, 99-104, 105-110, 111-116, 117-122, 123-128, 129-134, and 135-140. Residues 69–146 form a 13 X 6 AA approximate tandem repeats of A-H-H-A-A-N region; sequence AHHAANAHHA…HAANAHHAAD (78 aa). Low complexity predominate over residues 75–141; it reads AHHAANAHHA…AANAHHAANA (67 aa). One copy of the 2-13; approximate repeat lies at 141-146; sequence AHHAAD. 7 repeat units span residues 176–180, 181–185, 186–190, 191–195, 196–200, 201–205, and 206–210. The 7 X 5 AA tandem repeats of H-H-D-[DG]-A stretch occupies residues 176–210; that stretch reads HHDDAHHDGAHHDDAHHDGAHHDGAHHDGAHHDGA. A compositionally biased stretch (basic and acidic residues) spans 180–211; that stretch reads AHHDGAHHDDAHHDGAHHDGAHHDGAHHDGAH.

This Plasmodium falciparum (isolate FC27 / Papua New Guinea) protein is Small histidine-alanine-rich protein.